The following is an 803-amino-acid chain: Volume-regulated anion channel subunit LRRC8B (803 aa).

Residues 1 to 25 (MITLTELKCLADAQSSYHILKPWWD) lie on the Cytoplasmic side of the membrane. The chain crosses the membrane as a helical span at residues 26 to 46 (VFWYYITLIMLLVAVLAGALQ). Over 47-119 (LTQSRVLCCL…YEKQLHWFAK (73 aa)) the chain is Extracellular. 2 cysteine pairs are disulfide-bonded: Cys-55–Cys-304 and Cys-109–Cys-289. Asn-78 carries N-linked (GlcNAc...) asparagine glycosylation. The chain crosses the membrane as a helical span at residues 120–140 (FFPYLVLLHTLIFAACSNFWL). The Cytoplasmic segment spans residues 141-261 (HYPSTSSRLE…DIIYRVYLKQ (121 aa)). Phosphoserine is present on residues Ser-186 and Ser-196. The chain crosses the membrane as a helical span at residues 262-282 (IIVKVILFVLIITYVPYFLSY). Residues 283–307 (ITLEIDCSIDVQAFTGYKRYQCVYS) lie on the Extracellular side of the membrane. A helical transmembrane segment spans residues 308–328 (LAEIFKVLASFYVILVMLYGL). The Cytoplasmic segment spans residues 329–803 (TSSYSLWWML…ERLQTCLDKC (475 aa)). 15 LRR repeats span residues 415 to 439 (VKNSQDKVELHLFMLNGLPDNVFEL), 440 to 462 (TEMEVLSLELIPEVKLPAAVAQL), 464 to 486 (NLRELHVYHSSLVVDHPALAFLE), 488 to 509 (NLRILRLKFTEMGKIPRWVFHL), 511 to 532 (NLKELYLSGCVLPEQLSSLHLE), 539 to 559 (NLRTLYLKSSLSRIPQVVTDL), 562 to 582 (SLQKLSLDNEGSKLVVLNNLK), 586 to 607 (NLKSLELLSCDLERIPHSIFSL), 609 to 630 (NLHELDLKENNLKTVEEIISFQ), 634 to 655 (SLSCLKLWHNNIAYIPAQIGAL), 657 to 678 (NLEQLFLGHNNIESLPLQLFLC), 680 to 701 (KLHYLDLSYNHLTFIPEEIQYL), 703 to 724 (NLQYFAVTNNNIEMLPDGLFQC), 726 to 747 (KLQCLLLGRNSLTDLSPLVGEL), and 749 to 771 (NLTHLELTGNYLETLPVELEGCQ).

This sequence belongs to the LRRC8 family. As to quaternary structure, heterohexamer; oligomerizes with other LRRC8 proteins (LRRC8A, LRRC8C, LRRC8D and/or LRRC8E) to form a heterohexamer. In vivo, the subunit composition may depend primarily on expression levels, and heterooligomeric channels containing various proportions of the different LRRC8 proteins may coexist.

The protein resides in the cell membrane. It is found in the endoplasmic reticulum membrane. The enzyme catalyses chloride(in) = chloride(out). It catalyses the reaction iodide(out) = iodide(in). It carries out the reaction taurine(out) = taurine(in). Functionally, non-essential component of the volume-regulated anion channel (VRAC, also named VSOAC channel), an anion channel required to maintain a constant cell volume in response to extracellular or intracellular osmotic changes. The VRAC channel conducts iodide better than chloride and can also conduct organic osmolytes like taurine. Channel activity requires LRRC8A plus at least one other family member (LRRC8B, LRRC8C, LRRC8D or LRRC8E); channel characteristics depend on the precise subunit composition. The polypeptide is Volume-regulated anion channel subunit LRRC8B (Mus musculus (Mouse)).